The primary structure comprises 182 residues: Ribosome maturation factor RimM (182 aa).

The PRC barrel domain occupies 103-182 (DGSYYWKDLM…TIEVDWDPGF (80 aa)).

The protein belongs to the RimM family. As to quaternary structure, binds ribosomal protein uS19.

It localises to the cytoplasm. An accessory protein needed during the final step in the assembly of 30S ribosomal subunit, possibly for assembly of the head region. Essential for efficient processing of 16S rRNA. May be needed both before and after RbfA during the maturation of 16S rRNA. It has affinity for free ribosomal 30S subunits but not for 70S ribosomes. The protein is Ribosome maturation factor RimM of Citrobacter koseri (strain ATCC BAA-895 / CDC 4225-83 / SGSC4696).